A 137-amino-acid polypeptide reads, in one-letter code: Hydrogenase-4 component J (137 aa).

The protein to E.coli HycH.

Its function is as follows. Possible component of hydrogenase 4. This chain is Hydrogenase-4 component J, found in Escherichia coli (strain K12).